A 379-amino-acid chain; its full sequence is MATDYYAVLGVRRDASQDEIKKAFRRLARELHPDVNPDPKTQERFKEINAAYEVLSDPQKKQVYDLGGDPLSQNGGGGAGGFGQGGFGNFSDIMDAFFGTASQRGPRSRTRRGQDAMIRLDIELDEAAFGTTKDIQVDTAVVCNTCNGEGAAPGTSAQTCDMCRGRGEVSQVTRSFLGQVMTSRPCPQCQGFATVVPTPCPECAGDGRVPSRRTLTVKIPAGVDNGTRIQLAGEGEVGPGGGPGGDLYVEIHELPHSVFQRRGDDLHCTVTIPMTGPRPSAPRCLETLDGMEEIDIRPGTQSGQSVPLHGRGITHLRGGGGRDLIVHVEVTTPGKLDAEQEHLLRELAKLRGEERPTGQFQPGQQGLFSRLKDAFNGRS.

The region spanning 4–68 (DYYAVLGVRR…QKKQVYDLGG (65 aa)) is the J domain. The segment at 130–212 (GTTKDIQVDT…CAGDGRVPSR (83 aa)) adopts a CR-type zinc-finger fold. Zn(2+) contacts are provided by cysteine 143, cysteine 146, cysteine 160, cysteine 163, cysteine 186, cysteine 189, cysteine 200, and cysteine 203. CXXCXGXG motif repeat units follow at residues 143–150 (CNTCNGEG), 160–167 (CDMCRGRG), 186–193 (CPQCQGFA), and 200–207 (CPECAGDG). A disordered region spans residues 351–379 (RGEERPTGQFQPGQQGLFSRLKDAFNGRS). A compositionally biased stretch (polar residues) spans 358 to 367 (GQFQPGQQGL). Positions 370–379 (RLKDAFNGRS) are enriched in basic and acidic residues.

The protein belongs to the DnaJ family. In terms of assembly, homodimer. It depends on Zn(2+) as a cofactor.

Its subcellular location is the cytoplasm. In terms of biological role, participates actively in the response to hyperosmotic and heat shock by preventing the aggregation of stress-denatured proteins and by disaggregating proteins, also in an autonomous, DnaK-independent fashion. Unfolded proteins bind initially to DnaJ; upon interaction with the DnaJ-bound protein, DnaK hydrolyzes its bound ATP, resulting in the formation of a stable complex. GrpE releases ADP from DnaK; ATP binding to DnaK triggers the release of the substrate protein, thus completing the reaction cycle. Several rounds of ATP-dependent interactions between DnaJ, DnaK and GrpE are required for fully efficient folding. Also involved, together with DnaK and GrpE, in the DNA replication of plasmids through activation of initiation proteins. This Streptomyces albus G protein is Chaperone protein DnaJ 2.